The following is a 526-amino-acid chain: Chaperonin GroEL 2 (526 aa).

3 residues coordinate ATP: Lys50, Gly413, and Asp494.

It belongs to the chaperonin (HSP60) family. In terms of assembly, forms a cylinder of 14 subunits composed of two heptameric rings stacked back-to-back. Interacts with the co-chaperonin GroES.

It localises to the cytoplasm. The catalysed reaction is ATP + H2O + a folded polypeptide = ADP + phosphate + an unfolded polypeptide.. Its function is as follows. Together with its co-chaperonin GroES, plays an essential role in assisting protein folding. The GroEL-GroES system forms a nano-cage that allows encapsulation of the non-native substrate proteins and provides a physical environment optimized to promote and accelerate protein folding. This is Chaperonin GroEL 2 from Chlamydia pneumoniae (Chlamydophila pneumoniae).